Reading from the N-terminus, the 111-residue chain is Antitoxin PrlF (111 aa).

Residues 12–59 form the SpoVT-AbrB domain; the sequence is TTESKVTIRGQTTIPAPVREALKLKPGLDSIHYEILPGGQVFMCRLGD.

In terms of assembly, homodimer; forms a complex with YhaV with stoichiometry PrlF(2)-YhaV(4), possibly as a YhaV(2)-PrlF(2)-YhaV(2) complex like the MazFE complex.

Its subcellular location is the cytoplasm. In terms of biological role, antitoxin component of a type II toxin-antitoxin (TA) system. Labile antitoxin that binds to the YhaV toxin and neutralizes its ribonuclease activity. Also acts as a transcription factor. The YhaV/PrlF complex binds the prlF-yhaV operon, probably negatively regulating its expression. The protein is Antitoxin PrlF (prlF) of Escherichia coli O6:H1 (strain CFT073 / ATCC 700928 / UPEC).